Consider the following 288-residue polypeptide: uncharacterized protein (288 aa).

Over residues 1–12 the composition is skewed to basic and acidic residues; that stretch reads MTEGRCAQHPDG. Positions 1 to 20 are disordered; sequence MTEGRCAQHPDGLDVQDVCD.

Belongs to the class IV-like SAM-binding methyltransferase superfamily. RNA methyltransferase TrmH family.

This is an uncharacterized protein from Mycobacterium bovis (strain ATCC BAA-935 / AF2122/97).